The chain runs to 177 residues: Large ribosomal subunit protein uL6 (177 aa).

Belongs to the universal ribosomal protein uL6 family. In terms of assembly, part of the 50S ribosomal subunit.

Its function is as follows. This protein binds to the 23S rRNA, and is important in its secondary structure. It is located near the subunit interface in the base of the L7/L12 stalk, and near the tRNA binding site of the peptidyltransferase center. The polypeptide is Large ribosomal subunit protein uL6 (Yersinia enterocolitica serotype O:8 / biotype 1B (strain NCTC 13174 / 8081)).